We begin with the raw amino-acid sequence, 1324 residues long: MGFSEFFASALGTVARAKATLQGGFARFLSETVVTLQAASPEMRKFAYSKLWEEVDSVKELKPLTAQELVATLRKELWCAQVRAQKCTLASTSRFCTCGGIPGEATPTVIKETVHVDECPNGRNLCRHGTRCLRHGGPGSFQQEREVQVDAPKCPHCAGTGIVPASASWREIRRCWREQRKVHSLPSLPLHPDVLFEGTNAWQTRLRWLKTWRHVLGDVKPCTPEKWMQAAQIMRTCAVPSFENPIPGQFGYERLYNGEGKEEYWLQIPATDKYTDLIINWWHAKNTPGWEEPSSSLMDFKRNRMGPCLHIVEKRVRNSYVAPPWKPWGEDIDILSVMDSLSSQLEDFLDVFYDCAAQFDGELEFSLSNDRLSSVTGELGGVPISIGAPSKISNTPPKVNFAELYGNLVRHNHRKISALRPILMAHPDQDEIEDQLDHLENKQGGEIVSTPSFIKMLKEKRKEVRGKEFEEGSEGRLVRSKDLELSKKDIFLAHTLMDKFHGMSIVKKFGKSDPKLTKVCVDLTNQEEVIKYPVKELQTTSEGVLSAQTFTVLNRPQFKELNRLAEVGWKEAKSVCLNLHIRSYLPVHLPVYAFCVIMWGHSSNAEQASLSGAYVYLGDQEASVLQLPLLCGYIGNALEDMEAYKRSLVLSTCFFGTSGLSPGQNMFGITAVEFTEYLPTSYGGITHERDSWNQMLRNHQGVDKQRFISGFNVVDFVEAGKEKQLHFPDFDLQPVPKHQPIVRTFGKEKQPLLNKSRSMRVKTFTSFRAGNIPIGRQIDNTAEAINFELGRASTSNAINPRLDTSETNLRAGGEFAFIHTIDLPTAVTEGQVLAKIDIFKKIQDAKSMVCVQWMQAGYVNKNLTFISHLAPSQFCGVAIWYIFDAYGKIPSDVTTSLELEIARSLCPHVHVLRDSKTSVWTIDFHKICGQSLNFSGRGFSKPTLWVIAASTAQLPWSAQVTYRLEALAQGDEIAHGLATRSIVTYPISLEHLKDIEIMLPPRQMAIGNAGSINFPLSFAVQQKSSSGRIAYSYAAGLLSHFLGIGGTIHFKIQCTSSAFVTARLRVALWGDTITLEQLSQMPHVDCDVDVVSSLKIQSPFYATANFGDSGARFWVTPMSSPMAPETMESKLEYYIQILGIDADPPMCRQINYDQRFAWFTLLRPPDPKLSKILKLTLPSRVCNIAYKEATVTNYVNAFAIMCATTGMHAGKCILHFSWTLNKGTSFKDLQGHISFYSGMGDSTIGEHHGEFHLGGPLSSSLAVPFEFGSFAGPVTSGGTPFTSENWLRVETAHWDWLTSLTVDIQVLPGFRFYGRSAGPLTIPS.

The protein belongs to the nepoviruses RNA2 polyprotein family. Specific enzymatic cleavages in vivo by the P1 encoded 3C-like protease yield mature proteins. In terms of processing, the N-terminus of the coat protein is blocked.

It localises to the host cell junction. Its subcellular location is the host plasmodesma. The protein resides in the host cytoplasm. It is found in the host nucleus. The protein localises to the virion. Implicated in RNA2 replication. Could also be required for nematode transmission of the virus. Its function is as follows. Transports viral genome to neighboring plant cells directly through plasmosdesmata, without any budding. The movement protein allows efficient cell to cell propagation, by bypassing the host cell wall barrier. Acts by forming a tubular structure at the host plasmodesmata, enlarging it enough to allow free passage of virion capsids. The polypeptide is RNA2 polyprotein (Apium graveolens (Celery)).